A 233-amino-acid polypeptide reads, in one-letter code: MSTESMIQDVELAEEAFSKTQGPQGSRRRWFLSLFSFLLVAGATALFCLLHFGVIGPQREEQSSRDFSPINSLALAVRSSSRIPSDKPVAHVVANPQAEGQLQWLNRRANALLANGVELRDNQLVVPSDGLYLVYSQVLFKGQGCPSTFTLLTHSISRIAVSYQAKVNLLSAIKSPCQRETPRGAKTHPWYEPIYLGGVFQLEKGDRLSAEISPPDSLDLAESGQVYFGIIAL.

Topologically, residues 1–32 (MSTESMIQDVELAEEAFSKTQGPQGSRRRWFL) are cytoplasmic. Serine 2 carries the post-translational modification Phosphoserine; by CK1. Lysine 19 carries the N6-myristoyl lysine lipid modification. A helical; Signal-anchor for type II membrane protein transmembrane segment spans residues 33–55 (SLFSFLLVAGATALFCLLHFGVI). Topologically, residues 56–233 (GPQREEQSSR…GQVYFGIIAL (178 aa)) are extracellular. Serine 80 is a glycosylation site (O-linked (GalNAc...) serine; in soluble form). In terms of domain architecture, THD spans 88 to 233 (PVAHVVANPQ…GQVYFGIIAL (146 aa)). A disulfide bridge connects residues cysteine 145 and cysteine 177.

The protein belongs to the tumor necrosis factor family. In terms of assembly, homotrimer. Interacts with SPPL2B. The soluble form derives from the membrane form by proteolytic processing. The membrane-bound form is further proteolytically processed by SPPL2A or SPPL2B through regulated intramembrane proteolysis producing TNF intracellular domains (ICD1 and ICD2) released in the cytosol and TNF C-domain 1 and C-domain 2 secreted into the extracellular space. In terms of processing, the membrane form, but not the soluble form, is phosphorylated on serine residues. Dephosphorylation of the membrane form occurs by binding to soluble TNFRSF1A/TNFR1. Post-translationally, O-glycosylated; glycans contain galactose, N-acetylgalactosamine and N-acetylneuraminic acid. The soluble form is demyristoylated by SIRT6, promoting its secretion.

The protein localises to the cell membrane. Its subcellular location is the membrane. The protein resides in the secreted. Its function is as follows. Cytokine that binds to TNFRSF1A/TNFR1 and TNFRSF1B/TNFBR. It is mainly secreted by macrophages and can induce cell death of certain tumor cell lines. It is potent pyrogen causing fever by direct action or by stimulation of interleukin-1 secretion and is implicated in the induction of cachexia, Under certain conditions it can stimulate cell proliferation and induce cell differentiation. Induces insulin resistance in adipocytes via inhibition of insulin-induced IRS1 tyrosine phosphorylation and insulin-induced glucose uptake. Induces GKAP42 protein degradation in adipocytes which is partially responsible for TNF-induced insulin resistance. Plays a role in angiogenesis by inducing VEGF production synergistically with IL1B and IL6. Promotes osteoclastogenesis and therefore mediates bone resorption. Functionally, the TNF intracellular domain (ICD) form induces IL12 production in dendritic cells. In Saimiri sciureus (Common squirrel monkey), this protein is Tumor necrosis factor (TNF).